An 858-amino-acid polypeptide reads, in one-letter code: Beta-galactosidase 6 (858 aa).

A signal peptide spans 1–30 (MAAATVGVLLRLLLLPVVVVVSLLVGASRA). N-linked (GlcNAc...) asparagine glycosylation occurs at Asn-32. Glu-189 acts as the Proton donor in catalysis. Glu-258 functions as the Nucleophile in the catalytic mechanism. N-linked (GlcNAc...) asparagine glycans are attached at residues Asn-259, Asn-482, Asn-507, Asn-595, and Asn-830. Residues 772–858 (QTQGPALRLE…KSLVVEAACS (87 aa)) form the SUEL-type lectin domain.

The protein belongs to the glycosyl hydrolase 35 family.

It localises to the secreted. It is found in the extracellular space. The protein localises to the apoplast. The enzyme catalyses Hydrolysis of terminal non-reducing beta-D-galactose residues in beta-D-galactosides.. Functionally, releases galactose by hydrolysis of plant cell wall galactose-containing polysaccharides such as galacto-xyloglucan, pectic galactan and galactan (in vitro). This chain is Beta-galactosidase 6, found in Oryza sativa subsp. japonica (Rice).